Here is a 190-residue protein sequence, read N- to C-terminus: Remorin (190 aa).

A compositionally biased stretch (basic and acidic residues) spans 1-12 (MAEEQKTSKVDV). 2 disordered regions span residues 1 to 45 (MAEE…VESK) and 50 to 69 (VEKP…SADR). Residue Ser-14 is modified to Phosphoserine. Thr-58 is subject to Phosphothreonine. Positions 92-147 (EKSKAENRAQKKISDVHAWENSKKAAVEAQLRKIEEKLEKKKAQYGEKMKNKVAAI) form a coiled coil.

It belongs to the remorin family. As to quaternary structure, may polymerize to form filamentous structures. In terms of tissue distribution, expressed in roots, leaves, stems, flowers and siliques, with a maximal expression in apical regions.

Exhibits a non sequence-specific DNA-binding activity. This is Remorin (DBP) from Arabidopsis thaliana (Mouse-ear cress).